We begin with the raw amino-acid sequence, 270 residues long: Transcription factor PU.1 (270 aa).

A disordered region spans residues Leu124–Gly162. Phosphoserine is present on residues Ser140 and Ser146. Residues Leu153 to Gly162 are compositionally biased toward low complexity. Positions Ile170–Ser253 form a DNA-binding region, ETS. Residues Lys217, Arg230, Arg233, and Lys243 each contribute to the DNA site.

Belongs to the ETS family. As to quaternary structure, binds DNA as a monomer. Can form homomers. Directly interacts with CEBPD/NF-IL6-beta; this interaction does not affect DNA-binding properties of each partner. Interacts with NONO/p54(nrb). Interacts with RUNX1/AML1. Interacts with GFI1; the interaction represses SPI1 transcriptional activity, hence blocks SPI1-induced macrophage differentiation of myeloid progenitor cells. Interacts with CEBPE. Interacts with IRF4/Pip and IRF8. Interacts with JUN. Interacts with RB1. Interacts with TBP.

The protein resides in the nucleus. Its activity is regulated as follows. Transcriptional activity at macrophage-specific genes is inhibited by interaction with GFI1, which results in the inhibition of SPI1-induced macrophage differentiation of myeloid progenitor cells, but not that of the granulocyte lineage. In terms of biological role, pioneer transcription factor, which controls hematopoietic cell fate by decompacting stem cell heterochromatin and allowing other transcription factors to enter otherwise inaccessible genomic sites. Once in open chromatin, can directly control gene expression by binding genetic regulatory elements and can also more broadly influence transcription by recruiting transcription factors, such as interferon regulatory factors (IRFs), to otherwise inaccessible genomic regions. Transcriptionally activates genes important for myeloid and lymphoid lineages, such as CSF1R. Transcriptional activation from certain promoters, possibly containing low affinity binding sites, is achieved cooperatively with other transcription factors. FCER1A transactivation is achieved in cooperation with GATA1. May be particularly important for the pro- to pre-B cell transition. Binds (via the ETS domain) onto the purine-rich DNA core sequence 5'-GAGGAA-3', also known as the PU-box. In vitro can bind RNA and interfere with pre-mRNA splicing. The polypeptide is Transcription factor PU.1 (SPI1) (Sus scrofa (Pig)).